We begin with the raw amino-acid sequence, 55 residues long: Small ribosomal subunit protein eS31 (55 aa).

Residues C21, C24, C39, and C42 each coordinate Zn(2+). Residues 21 to 42 (CPRCGPGVFLAEHADRFTCGRC) form a C4-type zinc finger.

This sequence belongs to the eukaryotic ribosomal protein eS31 family. Part of the 30S ribosomal subunit. The cofactor is Zn(2+).

In Thermoplasma volcanium (strain ATCC 51530 / DSM 4299 / JCM 9571 / NBRC 15438 / GSS1), this protein is Small ribosomal subunit protein eS31.